Reading from the N-terminus, the 302-residue chain is Small ribosomal subunit protein uS3 (302 aa).

Positions 17 to 86 (IDEFFAEELA…DPQIDVQEVE (70 aa)) constitute a KH type-2 domain. Residues 222 to 302 (EDADAEDADA…EMDDEDGGAE (81 aa)) are disordered.

It belongs to the universal ribosomal protein uS3 family. As to quaternary structure, part of the 30S ribosomal subunit.

Binds the lower part of the 30S subunit head. This chain is Small ribosomal subunit protein uS3, found in Halobacterium salinarum (strain ATCC 700922 / JCM 11081 / NRC-1) (Halobacterium halobium).